The chain runs to 515 residues: Bifunctional purine biosynthesis protein PurH (515 aa).

One can recognise an MGS-like domain in the interval 1-145 (MTKRVLISVS…KNHASVTVVV (145 aa)).

It belongs to the PurH family.

The catalysed reaction is (6R)-10-formyltetrahydrofolate + 5-amino-1-(5-phospho-beta-D-ribosyl)imidazole-4-carboxamide = 5-formamido-1-(5-phospho-D-ribosyl)imidazole-4-carboxamide + (6S)-5,6,7,8-tetrahydrofolate. It catalyses the reaction IMP + H2O = 5-formamido-1-(5-phospho-D-ribosyl)imidazole-4-carboxamide. Its pathway is purine metabolism; IMP biosynthesis via de novo pathway; 5-formamido-1-(5-phospho-D-ribosyl)imidazole-4-carboxamide from 5-amino-1-(5-phospho-D-ribosyl)imidazole-4-carboxamide (10-formyl THF route): step 1/1. The protein operates within purine metabolism; IMP biosynthesis via de novo pathway; IMP from 5-formamido-1-(5-phospho-D-ribosyl)imidazole-4-carboxamide: step 1/1. The sequence is that of Bifunctional purine biosynthesis protein PurH from Streptococcus pneumoniae (strain P1031).